A 258-amino-acid chain; its full sequence is Imidazole glycerol phosphate synthase subunit HisF (258 aa).

Active-site residues include D11 and D130.

The protein belongs to the HisA/HisF family. As to quaternary structure, heterodimer of HisH and HisF.

It is found in the cytoplasm. It carries out the reaction 5-[(5-phospho-1-deoxy-D-ribulos-1-ylimino)methylamino]-1-(5-phospho-beta-D-ribosyl)imidazole-4-carboxamide + L-glutamine = D-erythro-1-(imidazol-4-yl)glycerol 3-phosphate + 5-amino-1-(5-phospho-beta-D-ribosyl)imidazole-4-carboxamide + L-glutamate + H(+). Its pathway is amino-acid biosynthesis; L-histidine biosynthesis; L-histidine from 5-phospho-alpha-D-ribose 1-diphosphate: step 5/9. Its function is as follows. IGPS catalyzes the conversion of PRFAR and glutamine to IGP, AICAR and glutamate. The HisF subunit catalyzes the cyclization activity that produces IGP and AICAR from PRFAR using the ammonia provided by the HisH subunit. The sequence is that of Imidazole glycerol phosphate synthase subunit HisF from Yersinia pseudotuberculosis serotype O:3 (strain YPIII).